A 248-amino-acid polypeptide reads, in one-letter code: Cytochrome c oxidase subunit 2 (248 aa).

The Mitochondrial intermembrane segment spans residues M1–Y36. The helical transmembrane segment at L37–I57 threads the bilayer. Residues E58–S75 are Mitochondrial matrix-facing. A helical membrane pass occupies residues I76–L100. The Mitochondrial intermembrane portion of the chain corresponds to Y101–S248. Residues H182, C217, E219, C221, H225, and M228 each contribute to the Cu cation site. E219 lines the Mg(2+) pocket.

It belongs to the cytochrome c oxidase subunit 2 family. Component of the cytochrome c oxidase (complex IV, CIV), a multisubunit enzyme composed of a catalytic core of 3 subunits and several supernumerary subunits. The complex exists as a monomer or a dimer and forms supercomplexes (SCs) in the inner mitochondrial membrane with ubiquinol-cytochrome c oxidoreductase (cytochrome b-c1 complex, complex III, CIII). Cu cation is required as a cofactor.

Its subcellular location is the mitochondrion inner membrane. The enzyme catalyses 4 Fe(II)-[cytochrome c] + O2 + 8 H(+)(in) = 4 Fe(III)-[cytochrome c] + 2 H2O + 4 H(+)(out). Component of the cytochrome c oxidase, the last enzyme in the mitochondrial electron transport chain which drives oxidative phosphorylation. The respiratory chain contains 3 multisubunit complexes succinate dehydrogenase (complex II, CII), ubiquinol-cytochrome c oxidoreductase (cytochrome b-c1 complex, complex III, CIII) and cytochrome c oxidase (complex IV, CIV), that cooperate to transfer electrons derived from NADH and succinate to molecular oxygen, creating an electrochemical gradient over the inner membrane that drives transmembrane transport and the ATP synthase. Cytochrome c oxidase is the component of the respiratory chain that catalyzes the reduction of oxygen to water. Electrons originating from reduced cytochrome c in the intermembrane space (IMS) are transferred via the dinuclear copper A center (CU(A)) of subunit 2 and heme A of subunit 1 to the active site in subunit 1, a binuclear center (BNC) formed by heme A3 and copper B (CU(B)). The BNC reduces molecular oxygen to 2 water molecules using 4 electrons from cytochrome c in the IMS and 4 protons from the mitochondrial matrix. The sequence is that of Cytochrome c oxidase subunit 2 (cox2) from Schizosaccharomyces pombe (strain 972 / ATCC 24843) (Fission yeast).